Consider the following 378-residue polypeptide: Packaging protein 3 (378 aa).

Disordered stretches follow at residues 1–73 (MHPV…EGPV) and 355–378 (SRPP…DDFI). The segment at 1–178 (MHPVLQSVRN…AFGEELRNTC (178 aa)) is interaction with packaging protein 1. Low complexity-rich tracts occupy residues 16–35 (GGPH…SVRR) and 49–58 (PGAGATPTAG). Phosphoserine; by host is present on Ser-362. Positions 363-378 (FADEGPSESDDEDDFI) are enriched in acidic residues.

It belongs to the adenoviridae packaging protein 3 family. In terms of assembly, part of the genome packaging complex composed of packaging proteins 1, 2 and 3; this complex specifically binds to the packaging sequence on the left end of viral genomic DNA and performs packaging of the viral genome. Interacts with hexon-linking protein IIIa; this interaction is required to promote correct genome packaging. Cleaved at different sites by the viral protease during virion maturation.

Its subcellular location is the host nucleus. Involved in viral genome packaging through its interaction with packaging proteins 1 and 2. After proteolytic cleavage by adenovirus protease, L1 52/55k protein is removed from the capsid during viral maturation. The sequence is that of Packaging protein 3 from Galliformes (FAdV-1).